The following is an 89-amino-acid chain: UPF0213 protein LMOf2365_0181 (89 aa).

The region spanning Ser5–Ala80 is the GIY-YIG domain.

The protein belongs to the UPF0213 family.

The chain is UPF0213 protein LMOf2365_0181 from Listeria monocytogenes serotype 4b (strain F2365).